The primary structure comprises 1312 residues: MKALDEPPYLTVGTDVSAKYRGAFCEAKIKTAKRLVKVKVTFRHDSSTVEVQDDHIKGPLKVGAIVEVKNLDGAYQEAVINKLTDASWYTVVFDDGDEKTLRRSSLCLKGERHFAESETLDQLPLTNPEHFGTPVIGKKTNRGRRSNHIPEEESSSSSSDEDEDDRKQIDELLGKVVCVDYISLDKKKALWFPALVVCPDCSDEIAVKKDNILVRSFKDGKFTSVPRKDVHEITSDTAPKPDAVLKQAFEQALEFHKSRTIPANWKTELKEDSSSSEAEEEEEEEDDEKEKEDNSSEEEEEIEPFPEERENFLQQLYKFMEDRGTPINKRPVLGYRNLNLFKLFRLVHKLGGFDNIESGAVWKQVYQDLGIPVLNSAAGYNVKCAYKKYLYGFEEYCRSANIEFQMALPEKVVNKQCKECENVKEIKVKEENETEIKEIKMEEERNIIPREEKPIEDEIERKENIKPSLGSKKNLLESIPTHSDQEKEVNIKKPEDNENLDDKDDDTTRVDESLNIKVEAEEEKAKSGDETNKEEDEDDEEAEEEEEEEEEEEDEDDDDNNEEEEFECYPPGMKVQVRYGRGKNQKMYEASIKDSDVEGGEVLYLVHYCGWNVRYDEWIKADKIVRPADKNVPKIKHRKKIKNKLDKEKDKDEKYSPKNCKLRRLSKPPFQTNPSPEMVSKLDLTDAKNSDTAHIKSIEITSILNGLQASESSAEDSEQEDERGAQDMDNNGKEESKIDHLTNNRNDLISKEEQNSSSLLEENKVHADLVISKPVSKSPERLRKDIEVLSEDTDYEEDEVTKKRKDVKKDTTDKSSKPQIKRGKRRYCNTEECLKTGSPGKKEEKAKNKESLCMENSSNSSSDEDEEETKAKMTPTKKYNGLEEKRKSLRTTGFYSGFSEVAEKRIKLLNNSDERLQNSRAKDRKDVWSSIQGQWPKKTLKELFSDSDTEAAASPPHPAPEEGVAEESLQTVAEEESCSPSVELEKPPPVNVDSKPIEEKTVEVNDRKAEFPSSGSNSVLNTPPTTPESPSSVTVTEGSRQQSSVTVSEPLAPNQEEVRSIKSETDSTIEVDSVAGELQDLQSEGNSSPAGFDASVSSSSSNQPEPEHPEKACTGQKRVKDAQGGGSSSKKQKRSHKATVVNNKKKGKGTNSSDSEELSAGESITKSQPVKSVSTGMKSHSTKSPARTQSPGKCGKNGDKDPDLKEPSNRLPKVYKWSFQMSDLENMTSAERITILQEKLQEIRKHYLSLKSEVASIDRRRKRLKKKERESAATSSSSSSPSSSSITAAVMLTLAEPSMSSASQNGMSVECR.

2 disordered regions span residues 124 to 166 and 266 to 306; these read PLTN…EDDR and KTEL…EPFP. Serine 276, serine 295, and serine 296 each carry phosphoserine. Over residues 277-305 the composition is skewed to acidic residues; the sequence is EAEEEEEEEDDEKEKEDNSSEEEEEIEPF. The 93-residue stretch at 306 to 398 folds into the ARID domain; it reads PEERENFLQQ…YLYGFEEYCR (93 aa). Glycyl lysine isopeptide (Lys-Gly) (interchain with G-Cter in SUMO2) cross-links involve residues lysine 429, lysine 440, and lysine 462. Disordered stretches follow at residues 458–577, 635–680, 708–894, 909–1212, and 1252–1288; these read EIER…KVQV, IKHR…EMVS, QASE…TTGF, LNNS…NRLP, and SEVASIDRRRKRLKKKERESAATSSSSSSPSSSSITA. The tract at residues 465–473 is antigenic epitope; that stretch reads IKPSLGSKK. Serine 483 is modified (phosphoserine). Basic and acidic residues predominate over residues 483–496; sequence SDQEKEVNIKKPED. Lysine 517 is covalently cross-linked (Glycyl lysine isopeptide (Lys-Gly) (interchain with G-Cter in SUMO2)). Acidic residues predominate over residues 532 to 567; sequence NKEEDEDDEEAEEEEEEEEEEEDEDDDDNNEEEEFE. A Tudor-knot domain is found at 572-624; that stretch reads GMKVQVRYGRGKNQKMYEASIKDSDVEGGEVLYLVHYCGWNVRYDEWIKADKI. The span at 643–656 shows a compositional bias: basic and acidic residues; sequence NKLDKEKDKDEKYS. Phosphoserine is present on residues serine 666, serine 675, and serine 717. Basic and acidic residues-rich tracts occupy residues 722-754 and 778-787; these read ERGAQDMDNNGKEESKIDHLTNNRNDLISKEEQ and SPERLRKDIE. The stretch at 728 to 754 forms a coiled coil; sequence MDNNGKEESKIDHLTNNRNDLISKEEQ. Lysine 751 is covalently cross-linked (Glycyl lysine isopeptide (Lys-Gly) (interchain with G-Cter in SUMO2)). A phosphoserine mark is found at serine 778 and serine 790. Positions 788–799 are enriched in acidic residues; it reads VLSEDTDYEEDE. Threonine 793 is modified (phosphothreonine). Composition is skewed to basic and acidic residues over residues 807–816, 828–852, 909–927, and 995–1010; these read VKKDTTDKSS, CNTEECLKTGSPGKKEEKAKNKESL, LNNSDERLQNSRAKDRKDV, and KPIEEKTVEVNDRKAE. A Phosphoserine modification is found at serine 1014. Threonine 1026 is subject to Phosphothreonine. The segment covering 1028-1037 has biased composition (low complexity); the sequence is ESPSSVTVTE. Serine 1029 bears the Phosphoserine mark. The span at 1038-1047 shows a compositional bias: polar residues; that stretch reads GSRQQSSVTV. Residues 1056-1065 show a composition bias toward basic and acidic residues; the sequence is EEVRSIKSET. The span at 1087–1101 shows a compositional bias: low complexity; that stretch reads SSPAGFDASVSSSSS. The tract at residues 1130–1137 is antigenic epitope; it reads KKQKRSHK. A compositionally biased stretch (basic residues) spans 1130–1148; sequence KKQKRSHKATVVNNKKKGK. Residue threonine 1150 is modified to Phosphothreonine. 4 positions are modified to phosphoserine: serine 1152, serine 1153, serine 1155, and serine 1159. The segment covering 1162–1191 has biased composition (polar residues); it reads ESITKSQPVKSVSTGMKSHSTKSPARTQSP. Residues 1196-1208 show a composition bias toward basic and acidic residues; it reads KNGDKDPDLKEPS. Positions 1231–1270 form a coiled coil; the sequence is ERITILQEKLQEIRKHYLSLKSEVASIDRRRKRLKKKERE. Residues 1272-1288 show a composition bias toward low complexity; the sequence is AATSSSSSSPSSSSITA.

Component of a Sin3A corepressor complex consisting of SIN3A, SAP130, SUDS3/SAP45, SAP180, HDAC1 and HDAC2. Interacts with ARID4A. Interacts with AR. Highly expressed in the testis and in breast, lung, colon, pancreatic and ovarian cancers. Expressed at low levels in the thymus, prostate and ovary.

It is found in the nucleus. It localises to the cytoplasm. Functionally, acts as a transcriptional repressor. May function in the assembly and/or enzymatic activity of the Sin3A corepressor complex or in mediating interactions between the complex and other regulatory complexes. Plays a role in the regulation of epigenetic modifications at the PWS/AS imprinting center near the SNRPN promoter, where it might function as part of a complex with RB1 and ARID4A. Involved in spermatogenesis, together with ARID4A, where it functions as a transcriptional coactivator for AR (androgen receptor) and enhances expression of genes required for sperm maturation. Regulates expression of the tight junction protein CLDN3 in the testis, which is important for integrity of the blood-testis barrier. Plays a role in myeloid homeostasis where it regulates the histone methylation state of bone marrow cells and expression of various genes involved in hematopoiesis. May function as a leukemia suppressor. The sequence is that of AT-rich interactive domain-containing protein 4B (ARID4B) from Homo sapiens (Human).